A 61-amino-acid polypeptide reads, in one-letter code: Short neurotoxin 1 (61 aa).

4 disulfide bridges follow: C3/C23, C17/C40, C42/C53, and C54/C59.

This sequence belongs to the three-finger toxin family. Short-chain subfamily. Type I alpha-neurotoxin sub-subfamily. As to expression, expressed by the venom gland.

The protein resides in the secreted. Binds to muscle nicotinic acetylcholine receptor (nAChR) and inhibit acetylcholine from binding to the receptor, thereby impairing neuromuscular transmission. The sequence is that of Short neurotoxin 1 from Naja philippinensis (Philippine cobra).